The following is a 1121-amino-acid chain: Phosphatidylinositol 4-kinase beta 1 (1121 aa).

The 143-residue stretch at Met1–Ala143 folds into the PIK helical domain. Residues Pro187 to Gly207 are compositionally biased toward polar residues. Positions Pro187–Leu210 are disordered. 9 tandem repeats follow at residues Ala212–Leu231, Ser244–Glu263, Pro266–Asp285, Asn288–Glu306, Ser309–Glu328, Ala331–Glu350, Pro353–Lys372, Glu380–Arg398, and Asp420–Lys438. Positions Ala212–Asp508 are 11 X 20 AA approximate repeats (PPC). Disordered regions lie at residues Glu343–Glu421, Asp435–Pro489, Val506–Ser544, and Ala794–Met825. Basic and acidic residues-rich tracts occupy residues Phe358–Glu376, Asp383–Glu405, Ala412–Glu421, and Asp435–Asp445. Over residues Gly446 to Pro455 the composition is skewed to acidic residues. Phosphoserine is present on residues Ser449 and Ser454. 2 tandem repeats follow at residues Ser454–Lys472 and Pro489–Asp508. Over residues Ile466–Ser475 the composition is skewed to basic and acidic residues. Positions Glu476–Pro489 are enriched in polar residues. The PI3K/PI4K catalytic domain occupies Glu835–Arg1106. The tract at residues Arg841–Ala847 is G-loop. The catalytic loop stretch occupies residues Gln969–Asn977. The segment at His988–Thr1012 is activation loop.

This sequence belongs to the PI3/PI4-kinase family. Type III PI4K subfamily. As to quaternary structure, interacts with AHK2, CBL1 and RABA4D. Expressed constitutively in leaves, roots, flowers, and stems.

The protein resides in the cell membrane. The protein localises to the golgi apparatus. It is found in the trans-Golgi network. It localises to the cytoplasmic vesicle membrane. It carries out the reaction a 1,2-diacyl-sn-glycero-3-phospho-(1D-myo-inositol) + ATP = a 1,2-diacyl-sn-glycero-3-phospho-(1D-myo-inositol 4-phosphate) + ADP + H(+). Its activity is regulated as follows. Stimulated by phosphatidylinositol 4-phosphate (PtdIns4P). Slightly repressed by phosphatidyl-choline (PtdCho), wortmannin and adenosine. Its function is as follows. Acts on phosphatidylinositol (PtdIns) in the first committed step in the production of the second messenger inositol-1,4,5-trisphosphate. Necessary for proper organization of the trans-Golgi network (TGN) and post-Golgi secretion in root hairs. Together with PI4KB2, required during polarized root hair expansion and pollen tube elongation. Functions redundantly with PI4KB2 upstream of the cold response phosphoinositide-dependent phospholipase C (PI-PLC) pathway. This chain is Phosphatidylinositol 4-kinase beta 1, found in Arabidopsis thaliana (Mouse-ear cress).